The primary structure comprises 833 residues: Leucine--tRNA ligase (833 aa).

The 'HIGH' region signature appears at 41–52 (PYPSGAGLHVGH). Positions 610-614 (KMSKS) match the 'KMSKS' region motif. Residue Lys-613 coordinates ATP.

It belongs to the class-I aminoacyl-tRNA synthetase family.

It localises to the cytoplasm. It carries out the reaction tRNA(Leu) + L-leucine + ATP = L-leucyl-tRNA(Leu) + AMP + diphosphate. In Streptococcus pneumoniae (strain Taiwan19F-14), this protein is Leucine--tRNA ligase.